A 79-amino-acid chain; its full sequence is Small ribosomal subunit protein bS18 (79 aa).

It belongs to the bacterial ribosomal protein bS18 family. Part of the 30S ribosomal subunit. Forms a tight heterodimer with protein bS6.

Functionally, binds as a heterodimer with protein bS6 to the central domain of the 16S rRNA, where it helps stabilize the platform of the 30S subunit. The sequence is that of Small ribosomal subunit protein bS18 (rpsR) from Bacillus subtilis (strain 168).